The primary structure comprises 467 residues: MTSLADLPVDVSPRHEGERIRSGDMYVELAGPKSFGAELFKVVDPDEIEPDKVEVIGPDIDEMEEGGRYPFAIYVKAAGEELEEDVEGVLERRIHEFCNYVEGFMHLNQRDQIWCRVSKNVTEKGFRLEHLGIALRELYKEEFGNVIDSVEVTIMTDEEKVEEFLEYARRVYKKRDERAKGLSEEDVNEFYVCLMCQSFAPTHVCVITPDRPSLCGSITWHDAKAAYKIDPEGPIFPIEKGECLDPEAGEYEGVNEAVKEHSQGTVERVYLHSCLEYPHTSCGCFQAVVFYIPEVDGFGIVDREYPGETPIGLPFSTMAGEASGGEQQPGFVGVSYGYMESDKFLQYDGGWERVVWMPKALKERMKHAIPDELYDKIATEEDATTVEELREFLEKVEHPVVERWAEEEEEEEEKAPEEEAPAEEPTMEVKELPIAPGGGLNVKIVLKNAKIYAEKVIIKRADREDKS.

[Ni-Fe-S] cluster-binding residues include C193, C196, C282, and C284. Positions 403–428 (RWAEEEEEEEEKAPEEEAPAEEPTME) are disordered. Residues 405–426 (AEEEEEEEEKAPEEEAPAEEPT) are compositionally biased toward acidic residues.

This sequence belongs to the CdhC family. Monomer. The ACDS complex is made up of alpha, epsilon, beta, gamma and delta chains with a probable stoichiometry of (alpha(2)epsilon(2))(4)-beta(8)-(gamma(1)delta(1))(8). It depends on [Ni-Fe-S] cluster as a cofactor.

The catalysed reaction is Co(I)-[corrinoid Fe-S protein] + acetyl-CoA + H(+) = methyl-Co(III)-[corrinoid Fe-S protein] + CO + CoA. Functionally, part of a complex that catalyzes the reversible cleavage of acetyl-CoA, allowing autotrophic growth from CO(2). The alpha-epsilon complex generates CO from CO(2), while the beta subunit (this protein) combines the CO with CoA and a methyl group to form acetyl-CoA. The methyl group, which is incorporated into acetyl-CoA, is transferred to the beta subunit by a corrinoid iron-sulfur protein (the gamma-delta complex). The chain is Acetyl-CoA decarbonylase/synthase complex subunit beta from Methanopyrus kandleri (strain AV19 / DSM 6324 / JCM 9639 / NBRC 100938).